Here is a 493-residue protein sequence, read N- to C-terminus: Keratin, type II cuticular Hb3 (493 aa).

Residues 1–111 form a head region; it reads MTCGFNSIGC…PNAQCVKQEE (111 aa). The IF rod domain occupies 111–422; sequence EKEQIKSLNS…RLLEGEEQRL (312 aa). Positions 112 to 146 are coil 1A; it reads KEQIKSLNSRFAAFIDKVRFLEQQNKLLETKLQFY. The tract at residues 147–156 is linker 1; the sequence is QNRECCQSNL. The interval 157-257 is coil 1B; the sequence is EPLFAGYIET…YEEEIRILQS (101 aa). Residue K217 forms a Glycyl lysine isopeptide (Lys-Gly) (interchain with G-Cter in SUMO1) linkage. The tract at residues 258 to 274 is linker 12; the sequence is HISDTSVVVKLDNSRDL. Residues 275–418 form a coil 2 region; that stretch reads NMDCIVAEIK…ATYRRLLEGE (144 aa). A tail region spans residues 419-493; sequence EQRLCEGVEA…GGGSCGQGRH (75 aa).

This sequence belongs to the intermediate filament family. As to quaternary structure, heterotetramer of two type I and two type II keratins. As to expression, synthesis begins in the cortex 10-15 cell layers above the apex of the dermal papilla and ends abruptly in the middle of the cortex.

This Homo sapiens (Human) protein is Keratin, type II cuticular Hb3 (KRT83).